The chain runs to 429 residues: Fez family zinc finger protein 1 (429 aa).

The Engrailed homology 1 repressor signature appears at P29 to P44. 6 C2H2-type zinc fingers span residues F247–H269, F275–H297, H303–H325, F331–H353, F359–H381, and F387–H410. Residues L409–Q429 form a disordered region.

It belongs to the krueppel C2H2-type zinc-finger protein family.

The protein localises to the nucleus. Its function is as follows. Transcription repressor. Involved in the development of the forebrain region. The sequence is that of Fez family zinc finger protein 1 (fezf1) from Danio rerio (Zebrafish).